A 463-amino-acid polypeptide reads, in one-letter code: Xanthine permease XanP (463 aa).

12 helical membrane passes run 43–63, 71–91, 93–113, 126–146, 156–176, 192–212, 222–242, 260–280, 352–372, 379–399, 409–429, and 439–459; these read LLAM…ALGL, IISM…KAWG, VGSG…PLIM, PTMM…EMVI, IITP…LIQV, TFGA…IILL, VASL…MGML, LYYG…VFMI, GFVV…SGFV, VLGG…VRIV, ILII…PLIL, and LLSS…LIFP.

Belongs to the nucleobase:cation symporter-2 (NCS2) (TC 2.A.40) family.

It localises to the cell inner membrane. The enzyme catalyses xanthine(in) + H(+)(in) = xanthine(out) + H(+)(out). Functionally, specific, proton motive force-dependent high-affinity transporter for xanthine. The sequence is that of Xanthine permease XanP (xanP) from Escherichia coli O6:H1 (strain CFT073 / ATCC 700928 / UPEC).